The following is a 487-amino-acid chain: Betaine aldehyde dehydrogenase (487 aa).

Positions 26 and 93 each coordinate K(+). Residue 150 to 152 participates in NAD(+) binding; the sequence is GAW. K162 (charge relay system) is an active-site residue. Residues 176–179 and 229–232 contribute to the NAD(+) site; these read KPSE and SVPT. L244 is a K(+) binding site. The active-site Proton acceptor is E250. Residues G252, C284, and E384 each contribute to the NAD(+) site. The active-site Nucleophile is C284. The residue at position 284 (C284) is a Cysteine sulfenic acid (-SOH). K(+) is bound by residues K454 and G457. The active-site Charge relay system is E461.

It belongs to the aldehyde dehydrogenase family. Dimer of dimers. K(+) serves as cofactor.

It carries out the reaction betaine aldehyde + NAD(+) + H2O = glycine betaine + NADH + 2 H(+). It functions in the pathway amine and polyamine biosynthesis; betaine biosynthesis via choline pathway; betaine from betaine aldehyde: step 1/1. In terms of biological role, involved in the biosynthesis of the osmoprotectant glycine betaine. Catalyzes the irreversible oxidation of betaine aldehyde to the corresponding acid. The chain is Betaine aldehyde dehydrogenase from Rhizobium johnstonii (strain DSM 114642 / LMG 32736 / 3841) (Rhizobium leguminosarum bv. viciae).